We begin with the raw amino-acid sequence, 207 residues long: Guanylate kinase (207 aa).

The region spanning 4–184 is the Guanylate kinase-like domain; that stretch reads GTLYIVSAPS…ALMDFKAIIR (181 aa). 11–18 contacts ATP; it reads APSGAGKS.

The protein belongs to the guanylate kinase family.

Its subcellular location is the cytoplasm. The enzyme catalyses GMP + ATP = GDP + ADP. It catalyses the reaction dZMP + ATP = dZDP + ADP. It functions in the pathway purine metabolism. Its function is as follows. Essential for recycling GMP and indirectly, cGMP. (Microbial infection) Catalyzes the phosphorylation of dZMP to dZDP, when the bacterium is infected by a phage that produces the substrate for the synthesis of dZTP (2- amino-2'-deoxyadenosine 5'-triphosphate), which is then used by the phage as a DNA polymerase substrate. This is Guanylate kinase (gmk) from Vibrio cholerae serotype O1 (strain ATCC 39315 / El Tor Inaba N16961).